We begin with the raw amino-acid sequence, 365 residues long: MPPFLRILGIETSCDETAASIVVRHADGRGEIVSDVVLSQLEEHSAYGGVVPEIAARAHVEALDTLVEEALDQAGVKLADVDAIAATSGPGLIGGLLVGLMTGKAIAKAAGKPLYAINHLEGHALTARLTDGLSFPYLMLLVSGGHTQLVLVRGVGEYERWGTTIDDALGEAFDKTAKLLGLPYPGGPAVENAAAKGDPDRFPLPRPMVGEARLDFSFSGLKTAVRQAATAIAPLSEQDIADICASFQKAVSRTLKDRIGRGLARFKVEFPHINGEPALVVAGGVAANQEIRQTLQALCDTHGFRFVAPPHRLCTDNAAMIAWAGLERMAEGRQADALEVAPRSRWPLDGSAETLIGFGKRGAKA.

Residues H119 and H123 each contribute to the Fe cation site. Substrate-binding positions include 141–145 (LVSGG), D174, G187, and N288. D316 contributes to the Fe cation binding site.

Belongs to the KAE1 / TsaD family. Fe(2+) is required as a cofactor.

Its subcellular location is the cytoplasm. It catalyses the reaction L-threonylcarbamoyladenylate + adenosine(37) in tRNA = N(6)-L-threonylcarbamoyladenosine(37) in tRNA + AMP + H(+). Functionally, required for the formation of a threonylcarbamoyl group on adenosine at position 37 (t(6)A37) in tRNAs that read codons beginning with adenine. Is involved in the transfer of the threonylcarbamoyl moiety of threonylcarbamoyl-AMP (TC-AMP) to the N6 group of A37, together with TsaE and TsaB. TsaD likely plays a direct catalytic role in this reaction. This is tRNA N6-adenosine threonylcarbamoyltransferase from Agrobacterium fabrum (strain C58 / ATCC 33970) (Agrobacterium tumefaciens (strain C58)).